The chain runs to 366 residues: Ribosomal RNA large subunit methyltransferase M (366 aa).

S-adenosyl-L-methionine is bound by residues Ser188, 221–224, Asp240, Asp260, and Asp277; that span reads CPGG. Lys306 serves as the catalytic Proton acceptor.

It belongs to the class I-like SAM-binding methyltransferase superfamily. RNA methyltransferase RlmE family. RlmM subfamily. In terms of assembly, monomer.

It is found in the cytoplasm. It carries out the reaction cytidine(2498) in 23S rRNA + S-adenosyl-L-methionine = 2'-O-methylcytidine(2498) in 23S rRNA + S-adenosyl-L-homocysteine + H(+). Catalyzes the 2'-O-methylation at nucleotide C2498 in 23S rRNA. This Klebsiella pneumoniae (strain 342) protein is Ribosomal RNA large subunit methyltransferase M.